A 181-amino-acid chain; its full sequence is Isopentenyl-diphosphate Delta-isomerase (181 aa).

The Mn(2+) site is built by H25 and H32. Positions 30-164 (PLHLAFSCWL…PWAFSPWMVM (135 aa)) constitute a Nudix hydrolase domain. C67 is a catalytic residue. C67 contributes to the Mg(2+) binding site. H69 serves as a coordination point for Mn(2+). Residue E87 coordinates Mg(2+). Mn(2+) contacts are provided by E114 and E116. Residue E116 is part of the active site.

This sequence belongs to the IPP isomerase type 1 family. In terms of assembly, homodimer. The cofactor is Mg(2+). Requires Mn(2+) as cofactor.

The protein resides in the cytoplasm. The catalysed reaction is isopentenyl diphosphate = dimethylallyl diphosphate. It functions in the pathway isoprenoid biosynthesis; dimethylallyl diphosphate biosynthesis; dimethylallyl diphosphate from isopentenyl diphosphate: step 1/1. Its function is as follows. Catalyzes the 1,3-allylic rearrangement of the homoallylic substrate isopentenyl (IPP) to its highly electrophilic allylic isomer, dimethylallyl diphosphate (DMAPP). This Salmonella typhi protein is Isopentenyl-diphosphate Delta-isomerase.